Reading from the N-terminus, the 1542-residue chain is ABC multidrug transporter AFR1 (1542 aa).

2 disordered regions span residues 1–84 and 118–141; these read MSAA…LPAD and SQQSQHELHRPTTRHSIRSSFSRK. Residues 18 to 41 show a composition bias toward polar residues; sequence TATTQNPSGLANSQVTSDPVPSAT. Over residues 60–69 the composition is skewed to basic and acidic residues; it reads DKSVDAEKVE. N-linked (GlcNAc...) asparagine glycans are attached at residues asparagine 207 and asparagine 397. The ABC transporter 1 domain occupies 221–473; that stretch reads LKVLGIFGVN…MIGLGYRDLP (253 aa). Transmembrane regions (helical) follow at residues 584-604, 618-638, 669-689, 694-714, and 726-746; these read FGISTGYATSIIIALIVGSVY, GGLLFLGLLFNALTSFSELPS, VPYNASVIFLFSIVLYFMGGL, GAFFIFYLFVFLTFMVMSAFF, and VAARLASVLISFMVTYTGYMI. Residue asparagine 822 is glycosylated (N-linked (GlcNAc...) asparagine). A helical membrane pass occupies residues 844–864; that stretch reads FGILVGFFAFFMFLQMMFIEY. The region spanning 917 to 1159 is the ABC transporter 2 domain; the sequence is FTWEGLNYTV…VLIDYLERNG (243 aa). Asparagine 923 carries an N-linked (GlcNAc...) asparagine glycan. ATP is bound at residue 953–960; the sequence is GASGAGKT. 6 helical membrane passes run 1253 to 1273, 1284 to 1304, 1335 to 1355, 1365 to 1385, 1390 to 1410, and 1516 to 1536; these read WTRLFAHLAIGLIVTLTFLQL, VFAIFFATVLPALILAQIEPQ, MPYSLGCAVSFFLLLYYGVGF, FFLMILVTEIYAVTLGQAVAA, ILIAALFNPFLLVLFSIFCGV, and FGIFICYVVFNILVLLIAARF.

This sequence belongs to the ABC transporter superfamily. ABCG family. PDR (TC 3.A.1.205) subfamily.

Its subcellular location is the cell membrane. It catalyses the reaction itraconazole(in) + ATP + H2O = itraconazole(out) + ADP + phosphate + H(+). The catalysed reaction is voriconazole(in) + ATP + H2O = voriconazole(out) + ADP + phosphate + H(+). The enzyme catalyses fluconazole(in) + ATP + H2O = fluconazole(out) + ADP + phosphate + H(+). Functionally, major pleiotropic ABC efflux transporter that confers resistance to structurally and functionally unrelated compounds including azoles such as fluconazole (FLC), itraconazole (ITC), posaconazole (POS), and voriconazole (VRC). Is also able to efflux the eukaryote protein synthesis inhibitor cycloheximide (CHX). This chain is ABC multidrug transporter AFR1, found in Cryptococcus deuterogattii (strain R265) (Cryptococcus gattii VGII (strain R265)).